A 64-amino-acid polypeptide reads, in one-letter code: Lantipeptide Flvbeta.d (64 aa).

Positions 1 to 31 (MDNNTEKFNELAAIADESELNEMLDENITGA) are cleaved as a propeptide — cleaved by FlvT. Residues 33 to 37 (STIQC) constitute a cross-link (lanthionine (Ser-Cys); by FlvM2). 2,3-didehydrobutyrine; by FlvM2 is present on residues Thr34 and Thr41. Cross-links (beta-methyllanthionine (Thr-Cys); by FlvM2) lie at residues 44–52 (TILSVVFDC), 55–58 (TSAC), and 59–62 (TPPC). The lanthionine (Ser-Cys); by FlvM2 cross-link spans 47 to 53 (SVVFDCC).

Contains LL-lanthionine, DL-lanthionine, and DL-beta-methyllanthionine, when coepressed in E.coli with the flavecin synthetase FlvM2.

Its subcellular location is the secreted. In terms of biological role, lanthionine-containing peptide that does probably not show antibacterial activity, since its analog [+2]Flvbeta.d does not show antibacterial activity against M.luteus. Also does not show antibiotic activity when tested with [Del2]Flvalpha.a, an analog of Flvalpha.a, which is encoded by the same operon than Flvbeta.d. The bactericidal activity of lantibiotics is based on depolarization of energized bacterial cytoplasmic membranes, initiated by the formation of aqueous transmembrane pores. The sequence is that of Lantipeptide Flvbeta.d from Ruminococcus flavefaciens.